Reading from the N-terminus, the 417-residue chain is MLSTRVVRLPKVISGGNKQLARGLASLSDEKSLNEANPTDLAGLKRKAKRRPTKLADELKTGPSFADFVTGKAKDMLVDPLELARNDPNARLPSWLKTQIPKGKSFHHLKSDLKELKLSTVCEEAKCPNIGECWGGKKSEATATIMLMGDTCTRGCRFCSVKTNRNPAPPDPNEPENTAEAISRWGLGYVVLTTVDRDDLPDGGAHHLASTVTKIKEKAPQILVECLSGDFRGNLEMAKVLASSPLDVFAHNLETVEDLTPHIRDRRATYRQSLSVLRAAKEANPRLVTKTSLMLGFGETDDQILQTLHDLRNISCDVVTFGQYMRPTKRHMKVVEYVTPSKFEYWRDKALEMGFLYCASGPLVRSSYKAGEAFIENVIKKRRTNVGAIEEQQHDKENNNLLLSKEDEKTTQEKANF.

Residues 35–56 (EANPTDLAGLKRKAKRRPTKLA) form a disordered region. A compositionally biased stretch (basic residues) spans 44–53 (LKRKAKRRPT). Positions 122, 127, 133, 152, 156, 159, and 367 each coordinate [4Fe-4S] cluster. The Radical SAM core domain maps to 137–356 (KKSEATATIM…RDKALEMGFL (220 aa)). The segment at 389 to 417 (IEEQQHDKENNNLLLSKEDEKTTQEKANF) is disordered. Over residues 391–417 (EQQHDKENNNLLLSKEDEKTTQEKANF) the composition is skewed to basic and acidic residues.

It belongs to the radical SAM superfamily. Lipoyl synthase family. It depends on [4Fe-4S] cluster as a cofactor.

It is found in the mitochondrion. The catalysed reaction is [[Fe-S] cluster scaffold protein carrying a second [4Fe-4S](2+) cluster] + N(6)-octanoyl-L-lysyl-[protein] + 2 oxidized [2Fe-2S]-[ferredoxin] + 2 S-adenosyl-L-methionine + 4 H(+) = [[Fe-S] cluster scaffold protein] + N(6)-[(R)-dihydrolipoyl]-L-lysyl-[protein] + 4 Fe(3+) + 2 hydrogen sulfide + 2 5'-deoxyadenosine + 2 L-methionine + 2 reduced [2Fe-2S]-[ferredoxin]. It functions in the pathway protein modification; protein lipoylation via endogenous pathway; protein N(6)-(lipoyl)lysine from octanoyl-[acyl-carrier-protein]: step 2/2. Catalyzes the radical-mediated insertion of two sulfur atoms into the C-6 and C-8 positions of the octanoyl moiety bound to the lipoyl domains of lipoate-dependent enzymes, thereby converting the octanoylated domains into lipoylated derivatives. This chain is Lipoyl synthase, mitochondrial, found in Komagataella phaffii (strain GS115 / ATCC 20864) (Yeast).